Consider the following 315-residue polypeptide: Heme oxygenase 2 (315 aa).

Residues Met-1–Asp-12 are compositionally biased toward acidic residues. The interval Met-1–Lys-28 is disordered. Ser-2 is subject to N-acetylserine. Position 2 is a phosphoserine (Ser-2). Over Ser-2–Ser-294 the chain is Cytoplasmic. Residues Glu-13 to Lys-28 show a composition bias toward basic and acidic residues. His-44, Tyr-153, Lys-198, and Arg-202 together coordinate heme b. 2 HRM repeats span residues Lys-263–Ala-268 and Asn-280–Thr-285. 2 positions are modified to S-nitrosocysteine: Cys-264 and Cys-281. A helical; Anchor for type IV membrane protein membrane pass occupies residues Leu-295–Met-315.

This sequence belongs to the heme oxygenase family. A soluble form arises by proteolytic removal of the membrane anchor. Post-translationally, S-nitrosylated by BLVRB. As to expression, ubiquitous.

Its subcellular location is the microsome membrane. The protein localises to the endoplasmic reticulum membrane. It carries out the reaction heme b + 3 reduced [NADPH--hemoprotein reductase] + 3 O2 = biliverdin IXalpha + CO + Fe(2+) + 3 oxidized [NADPH--hemoprotein reductase] + 3 H2O + H(+). In terms of biological role, catalyzes the oxidative cleavage of heme at the alpha-methene bridge carbon, released as carbon monoxide (CO), to generate biliverdin IXalpha, while releasing the central heme iron chelate as ferrous iron. This is Heme oxygenase 2 (Hmox2) from Mus musculus (Mouse).